Reading from the N-terminus, the 222-residue chain is Zinc finger C2HC domain-containing protein 1B (222 aa).

The C2HC/C3H-type 1 zinc finger occupies 14–43 (ELFPCEVCGRRFAADVLERHGPICKKLFNR). The Zn(2+) site is built by Cys-18, Cys-21, His-33, and Cys-37. A disordered region spans residues 48-78 (FSSLKQRLQGTDIPTVKKTPQSKSPPVRKSN). The C2HC/C3H-type 2; degenerate zinc-finger motif lies at 117 to 146 (DYIQRPYCMRRFNESAAERHTNFCKDQSSR). The segment at 196 to 222 (PTKSGLAMDPASGAKLRQGFSKSSKKD) is disordered.

Belongs to the ZC2HC1 family. Zn(2+) serves as cofactor.

The sequence is that of Zinc finger C2HC domain-containing protein 1B (ZC2HC1B) from Homo sapiens (Human).